Here is a 216-residue protein sequence, read N- to C-terminus: Orotate phosphoribosyltransferase (216 aa).

Lys30 is a 5-phospho-alpha-D-ribose 1-diphosphate binding site. 38–39 provides a ligand contact to orotate; it reads FF. 5-phospho-alpha-D-ribose 1-diphosphate-binding positions include 75–76, Arg102, Lys103, Lys106, His108, and 128–136; these read YK and DDVITAGTA. Residues Thr132 and Arg160 each contribute to the orotate site.

Belongs to the purine/pyrimidine phosphoribosyltransferase family. PyrE subfamily. In terms of assembly, homodimer. The cofactor is Mg(2+).

It carries out the reaction orotidine 5'-phosphate + diphosphate = orotate + 5-phospho-alpha-D-ribose 1-diphosphate. The protein operates within pyrimidine metabolism; UMP biosynthesis via de novo pathway; UMP from orotate: step 1/2. Functionally, catalyzes the transfer of a ribosyl phosphate group from 5-phosphoribose 1-diphosphate to orotate, leading to the formation of orotidine monophosphate (OMP). The chain is Orotate phosphoribosyltransferase from Acinetobacter baumannii (strain AB307-0294).